A 450-amino-acid polypeptide reads, in one-letter code: ATP-dependent protease ATPase subunit HslU (450 aa).

ATP is bound by residues Val27, 69–74 (GVGKTE), Asp263, Glu328, and Arg400.

Belongs to the ClpX chaperone family. HslU subfamily. As to quaternary structure, a double ring-shaped homohexamer of HslV is capped on each side by a ring-shaped HslU homohexamer. The assembly of the HslU/HslV complex is dependent on binding of ATP.

Its subcellular location is the cytoplasm. In terms of biological role, ATPase subunit of a proteasome-like degradation complex; this subunit has chaperone activity. The binding of ATP and its subsequent hydrolysis by HslU are essential for unfolding of protein substrates subsequently hydrolyzed by HslV. HslU recognizes the N-terminal part of its protein substrates and unfolds these before they are guided to HslV for hydrolysis. This is ATP-dependent protease ATPase subunit HslU from Aquifex aeolicus (strain VF5).